The sequence spans 173 residues: Transmembrane protein 240 (173 aa).

2 helical membrane passes run 5-25 (ANTM…ACLM) and 90-110 (LMLG…MDGV). The residue at position 169 (serine 169) is a Phosphoserine.

The protein localises to the synapse. Its subcellular location is the cell membrane. The protein is Transmembrane protein 240 (Tmem240) of Mus musculus (Mouse).